The primary structure comprises 776 residues: MLKLFSAFRKEKVWDFNGGIHPPEMKTQSNGTPLRQLPLPGRFIIPLKQHIGSEGEICVAPGDKVLRGQPLTIGRGRMLPVHAPTSGTVTAIMPHPTAHPSALPELSVIIDADGEDRWIARDGWSDYQCRSREALIERIHQFGVAGLGGAGFPTGTKLQGGGDKIETLIINAAECEPYITADDRLMQDCAAQIIDGVRILAHILQPREVLIGIEDNKPQAISMMRAVLHGEHKIRLRVIPTKYPSGGAKQLTQILTGKQVPHGGRSSDIGVLMQNVGTAFAVKRAIIDGEPLTERVVTLTGEAVGRPGNVWARIGTPVRHLLEHAGFIPTSEQLVIMGGPLMGFTLPGLDVPVVKITNCLLAPSATEMGAPQEEQHCIRCSACADACPADLLPQQLYWFSVGQQHDKATAHNLADCIECGACAYVCPSNIPLVQYFRQEKAEIRAIAEEEKRAAEAKARFEARQARLEREKAARLERHKKSAVQPSGQDQDAIQAALARVREKKGDDQPIIVAAGAKPDNSAVIAAREARKAEARARQAEKVQQEMAANSSVPAHEATEPEIDASAESVDPRKAAVEAAIARAKARKAAQAGENATADEKPAEPIDPRKAAVEAAIARAKARKAAQAGENATADEKPAEPIDPRKAAVEAAIARAKARKAAQAGENATADEKPAEPIDPRKAAVEAAIARAKARKAAQAGENATADEKPAEPIDPRKATVEAAIARAKARKAAQAGERAQAANEENEAEDPRKAAVAAAIARVQARKAAEKVVNED.

4Fe-4S ferredoxin-type domains follow at residues 368–397 and 407–436; these read MGAPQEEQHCIRCSACADACPADLLPQQLY and KATAHNLADCIECGACAYVCPSNIPLVQYF. [4Fe-4S] cluster-binding residues include cysteine 377, cysteine 380, cysteine 383, cysteine 387, cysteine 416, cysteine 419, cysteine 422, and cysteine 426. Composition is skewed to basic and acidic residues over residues 534-543, 597-611, 633-647, 669-683, and 705-719; these read ARARQAEKVQ, ADEKPAEPIDPRKAA, and ADEKPAEPIDPRKAT. Positions 534-754 are disordered; sequence ARARQAEKVQ…ENEAEDPRKA (221 aa). The span at 721–743 shows a compositional bias: low complexity; that stretch reads EAAIARAKARKAAQAGERAQAAN.

The protein belongs to the 4Fe4S bacterial-type ferredoxin family. RnfC subfamily. As to quaternary structure, the complex is composed of six subunits: RnfA, RnfB, RnfC, RnfD, RnfE and RnfG. [4Fe-4S] cluster serves as cofactor.

It localises to the cell inner membrane. In terms of biological role, part of a membrane-bound complex that couples electron transfer with translocation of ions across the membrane. The sequence is that of Ion-translocating oxidoreductase complex subunit C from Cronobacter sakazakii (strain ATCC BAA-894) (Enterobacter sakazakii).